A 430-amino-acid chain; its full sequence is tRNA(Ile)-lysidine synthase (430 aa).

Residue 21 to 26 (SGGLDS) coordinates ATP.

Belongs to the tRNA(Ile)-lysidine synthase family.

Its subcellular location is the cytoplasm. It carries out the reaction cytidine(34) in tRNA(Ile2) + L-lysine + ATP = lysidine(34) in tRNA(Ile2) + AMP + diphosphate + H(+). Its function is as follows. Ligates lysine onto the cytidine present at position 34 of the AUA codon-specific tRNA(Ile) that contains the anticodon CAU, in an ATP-dependent manner. Cytidine is converted to lysidine, thus changing the amino acid specificity of the tRNA from methionine to isoleucine. In Salmonella choleraesuis (strain SC-B67), this protein is tRNA(Ile)-lysidine synthase.